Reading from the N-terminus, the 337-residue chain is MAVLASWVWVLAGCFCAAVAEVSDSSDPYPPLWEDSPEQLSDYMMEDGNYIINPWVYTDRMGMYRILLEETAMYFAKYGPENEQNLLWGLPLQFGWQYQSGRLADPTGMTDCGNELNESLCVSVDSWWADINYYLSVIPFLAAVDSGITGISPNQITILPPPKDQMRFCYNVSDCQSAVPGTMNRWRDFFQYMQLNSSDFDGLLNYLWEAHASSLDYPTSAFGDRYNFYSEKEANFEENWAIAVNYLAAARLPTTQNRTYSFQRGLPPRVLVDTDIAPFIPDFTPLQNEVLVSLKLLGDTDRNSGSLSLTLWENLMSTKLARTLFLKAFEEFLATSS.

Positions 1 to 20 (MAVLASWVWVLAGCFCAAVA) are cleaved as a signal peptide. Asn171 is a glycosylation site (N-linked (GlcNAc...) asparagine).

This sequence belongs to the LEG1 family.

The protein resides in the secreted. In terms of biological role, may be involved in early liver development. This is Protein LEG1 homolog from Mus musculus (Mouse).